We begin with the raw amino-acid sequence, 489 residues long: E3 ubiquitin-protein ligase RGLG1 (489 aa).

The segment covering 1–10 has biased composition (basic and acidic residues); the sequence is MGGGNSKEES. The interval 1-125 is disordered; the sequence is MGGGNSKEES…SQSQVADRKK (125 aa). G2 is lipidated: N-myristoyl glycine. Low complexity predominate over residues 11–23; sequence SSPSSSSWASHQS. Positions 34-57 are enriched in pro residues; that stretch reads YPPPPTYAPAPSPAPAPAPVPAPS. Residues 58 to 75 show a composition bias toward low complexity; that stretch reads PASSYGPQYSQEGYASQP. Positions 76-88 are enriched in pro residues; sequence NNPPPPTYAPAPS. Residues 156 to 376 form the VWFA domain; the sequence is NLIVGIDFTK…KETEFALSAL (221 aa). An RING-type zinc finger spans residues 446–479; it reads CPICLSNPKNMAFGCGHQTCCECGPDLKVCPICR.

In terms of assembly, interacts with the heterodimer UBC35/UEV1B. Interacts with ERF053. Interacts with PP2CA. N-myristoylated. As to expression, ubiquitously expressed.

The protein resides in the cell membrane. Its subcellular location is the nucleus. The enzyme catalyses S-ubiquitinyl-[E2 ubiquitin-conjugating enzyme]-L-cysteine + [acceptor protein]-L-lysine = [E2 ubiquitin-conjugating enzyme]-L-cysteine + N(6)-ubiquitinyl-[acceptor protein]-L-lysine.. In terms of biological role, E3 ubiquitin-protein ligase that mediates the formation of 'Lys-63'-linked ubiquitin chains. Regulates apical dominance by acting on the auxin transport proteins abundance. Together with RGLG5, mediates the ubiquitination and subsequent proteasomal degradation of the target protein PP2CA. Functions as a positive regulator of abscisic acid (ABA) signaling through ABA-dependent degradation of PP2CA, a major inhibitor of ABA signaling. Acts as a negative regulator of drought stress response. This Arabidopsis thaliana (Mouse-ear cress) protein is E3 ubiquitin-protein ligase RGLG1.